Here is a 197-residue protein sequence, read N- to C-terminus: Small ribosomal subunit protein uS4c (197 aa).

In terms of domain architecture, S4 RNA-binding spans 92-153 (MRLDAVVYRL…APIVEHAKTF (62 aa)).

This sequence belongs to the universal ribosomal protein uS4 family. As to quaternary structure, part of the 30S ribosomal subunit. Contacts protein S5. The interaction surface between S4 and S5 is involved in control of translational fidelity.

The protein localises to the plastid. It is found in the chloroplast. Its function is as follows. One of the primary rRNA binding proteins, it binds directly to 16S rRNA where it nucleates assembly of the body of the 30S subunit. In terms of biological role, with S5 and S12 plays an important role in translational accuracy. This is Small ribosomal subunit protein uS4c (rps4) from Ostreococcus tauri.